The primary structure comprises 1119 residues: Solute carrier family 38 member 10 (1119 aa).

10 helical membrane-spanning segments follow: residues 4 to 24, 36 to 58, 84 to 104, 120 to 140, 153 to 173, 229 to 249, 272 to 292, 323 to 343, 345 to 365, and 378 to 398; these read AAAS…GVSV, IVLG…MFLV, LVET…YVVI, VGGT…VLPL, FSAM…LSSL, IFAS…FFGY, MLRV…ILPC, ALTL…PNVE, ILGL…PALI, and VVLW…LSVS. Disordered regions lie at residues 438–691 and 731–1071; these read AEDG…EEAG and KEIH…DGVI. Composition is skewed to basic and acidic residues over residues 439–454, 466–475, 493–522, 544–559, and 592–603; these read EDGR…REEL, PGREDGKEAP, EAHR…ENKP, DSER…EVGK, and AKEDLGPGDRGL. Ser-612 carries the post-translational modification Phosphoserine. A compositionally biased stretch (pro residues) spans 652-667; sequence PPLPAEKPAPGPGLPP. 3 stretches are compositionally biased toward basic and acidic residues: residues 668–677, 731–752, and 763–773; these read EPREQRDVER, KEIH…EVHQ, and EAPEGKARETV. Phosphothreonine is present on Thr-772. Phosphoserine is present on Ser-802. Basic and acidic residues-rich tracts occupy residues 832–841 and 863–876; these read KLRDGQKDAA and PARE…RLAE. The segment covering 880 to 889 has biased composition (polar residues); it reads GQSQDVTGGS. A phosphoserine mark is found at Ser-889, Ser-965, and Ser-997. Basic and acidic residues-rich tracts occupy residues 975-1005, 1012-1022, and 1033-1042; these read HRLD…RGGE, PRQRPEPELGL, and DNAKPNRDLK.

Belongs to the amino acid/polyamine transporter 2 family.

Its subcellular location is the membrane. The catalysed reaction is L-glutamate(out) = L-glutamate(in). The enzyme catalyses L-glutamine(out) = L-glutamine(in). It carries out the reaction L-alanine(in) = L-alanine(out). It catalyses the reaction L-serine(in) = L-serine(out). The catalysed reaction is L-leucine(in) = L-leucine(out). In terms of biological role, facilitates bidirectional transport of amino acids. May act as a glutamate sensor that regulates glutamate-glutamine cycle and mTOR signaling in the brain. The transport mechanism remains to be elucidated. This chain is Solute carrier family 38 member 10, found in Homo sapiens (Human).